The following is a 391-amino-acid chain: Elongation factor Tu (391 aa).

Residues 10-201 enclose the tr-type G domain; it reads KPHVNIGTIG…AVDDYIPTPE (192 aa). Positions 19–26 are G1; sequence GHVDHGKT. 19–26 contacts GTP; that stretch reads GHVDHGKT. T26 provides a ligand contact to Mg(2+). The tract at residues 55-59 is G2; sequence GITIS. The G3 stretch occupies residues 76 to 79; that stretch reads DCPG. GTP-binding positions include 76–80 and 131–134; these read DCPGH and NKVD. The G4 stretch occupies residues 131–134; sequence NKVD. Residues 169–171 are G5; that stretch reads SAL.

It belongs to the TRAFAC class translation factor GTPase superfamily. Classic translation factor GTPase family. EF-Tu/EF-1A subfamily. Monomer.

The protein localises to the cytoplasm. The catalysed reaction is GTP + H2O = GDP + phosphate + H(+). Its function is as follows. GTP hydrolase that promotes the GTP-dependent binding of aminoacyl-tRNA to the A-site of ribosomes during protein biosynthesis. This is Elongation factor Tu from Paracoccus denitrificans (strain Pd 1222).